Consider the following 299-residue polypeptide: Aspartate carbamoyltransferase catalytic subunit (299 aa).

Residues Arg51 and Thr52 each contribute to the carbamoyl phosphate site. Lys80 contributes to the L-aspartate binding site. 3 residues coordinate carbamoyl phosphate: Arg101, His129, and Gln132. Arg162 and Arg221 together coordinate L-aspartate. Carbamoyl phosphate contacts are provided by Leu260 and Pro261.

It belongs to the aspartate/ornithine carbamoyltransferase superfamily. ATCase family. In terms of assembly, heterooligomer of catalytic and regulatory chains.

It catalyses the reaction carbamoyl phosphate + L-aspartate = N-carbamoyl-L-aspartate + phosphate + H(+). Its pathway is pyrimidine metabolism; UMP biosynthesis via de novo pathway; (S)-dihydroorotate from bicarbonate: step 2/3. Catalyzes the condensation of carbamoyl phosphate and aspartate to form carbamoyl aspartate and inorganic phosphate, the committed step in the de novo pyrimidine nucleotide biosynthesis pathway. In Sulfolobus acidocaldarius (strain ATCC 33909 / DSM 639 / JCM 8929 / NBRC 15157 / NCIMB 11770), this protein is Aspartate carbamoyltransferase catalytic subunit.